The following is a 1155-amino-acid chain: Agglutinin-like protein 3 (1155 aa).

The first 17 residues, 1 to 17 (MLQQYTLLLIYLSVATA), serve as a signal peptide directing secretion. 4 disulfides stabilise this stretch: Cys73-Cys150, Cys96-Cys112, Cys205-Cys298, and Cys227-Cys256. ALS repeat units follow at residues 365-396 (TTITTSYVGVTTSYSTKTAPIGETATVIVDIP), 401-432 (TTVTSKWTGTITSTTTHTNPTDSIDTVIVQVP), and 438-469 (VTTTEYWSQSFATTTTITGPPGNTDTVLIREP). Asn471 carries an N-linked (GlcNAc...) asparagine glycan. 2 ALS repeats span residues 474-505 (VTTTEYWSESYTTTSTFTAPPGGTDSVIIKEP) and 510-541 (VTTTEYWSESYTTTTTVTAPPGGTDTVIIREP). An N-linked (GlcNAc...) asparagine glycan is attached at Asn543. ALS repeat units follow at residues 546–577 (VTTTEYWSQSYTTTTTVIAPPGGTDSVIIREP) and 582–613 (VTTTEYWSQSYATTTTITAPPGETDTVLIREP). Asn615 is a glycosylation site (N-linked (GlcNAc...) asparagine). The ALS 8 repeat unit spans residues 618-649 (VTTTEYWSQSYATTTTITAPPGETDTVLIREP). Asn651 carries N-linked (GlcNAc...) asparagine glycosylation. ALS repeat units lie at residues 654-685 (VTTTEYWSQSYTTTTTVIAPPGGTDSVIIKEP) and 690-721 (VTTTEYWSQSYATTTTITAPPGETDTVLIREP). N-linked (GlcNAc...) asparagine glycosylation is present at Asn723. Residues 726–757 (VTTTEYWSQSYATTTTITAPPGETDTVLIREP) form an ALS 11 repeat. N-linked (GlcNAc...) asparagine glycosylation occurs at Asn759. Residues 762–793 (VTTTEYWSQSFATTTTVTAPPGGTDTVIIREP) form an ALS 12 repeat. N-linked (GlcNAc...) asparagine glycosylation is present at Asn795. 2 ALS repeats span residues 798-829 (VTTTEYWSQSFATTTTIIAPPGETDTVLIREP) and 834-863 (VTTTEYWSQSYTTATTVTAPPGGTDTVIIY). Asn881 is a glycosylation site (N-linked (GlcNAc...) asparagine). The interval 936–1115 (TTTESTLQSP…NSDTQQTTLS (180 aa)) is disordered. Positions 949-965 (FSESGVSVETESSTFTT) are enriched in low complexity. Residues 966 to 977 (AQTNPSVPTTES) show a composition bias toward polar residues. Positions 1010–1019 (TTSTAASTST) are enriched in low complexity. An N-linked (GlcNAc...) asparagine glycan is attached at Asn1023. Low complexity-rich tracts occupy residues 1034–1058 (ASSPIISSSADETTTVTTTAESTSV) and 1071–1115 (APSA…TTLS). N-linked (GlcNAc...) asparagine glycosylation occurs at Asn1099. Ser1134 is lipidated: GPI-anchor amidated serine. Residues 1135-1155 (GSVIQHSTWLCGLITLLSLFI) constitute a propeptide, removed in mature form.

The protein belongs to the ALS family. Post-translationally, the GPI-anchor is attached to the protein in the endoplasmic reticulum and serves to target the protein to the cell surface. There, the glucosamine-inositol phospholipid moiety is cleaved off and the GPI-modified mannoprotein is covalently attached via its lipidless GPI glycan remnant to the 1,6-beta-glucan of the outer cell wall layer.

Its subcellular location is the cell membrane. The protein localises to the secreted. It is found in the cell wall. In terms of biological role, cell surface adhesion protein which mediates both yeast-to-host tissue adherence and yeast aggregation. Plays an important role in the biofilm formation and pathogenesis of C.albicans infections. Necessary for C.albicans to bind to N-cadherin on endothelial cells and E-cadherin on oral epithelial cells and subsequent endocytosis by these cells. During disseminated infection, mediates initial trafficking to the brain and renal cortex and contributes to fungal persistence in the kidneys. In Candida albicans (strain SC5314 / ATCC MYA-2876) (Yeast), this protein is Agglutinin-like protein 3 (ALS3).